Reading from the N-terminus, the 481-residue chain is Ribosomal protein uS12 methylthiotransferase RimO (481 aa).

Residues 38-148 (NRIGFVSLGC…VLKHVHKYVP (111 aa)) enclose the MTTase N-terminal domain. Residues Cys-47, Cys-83, Cys-112, Cys-180, Cys-184, and Cys-187 each contribute to the [4Fe-4S] cluster site. A Radical SAM core domain is found at 166–403 (LTPKHYAYLK…MEVQAEISAE (238 aa)). The 67-residue stretch at 406–472 (ARFVGRTMDI…EHDLWAELVD (67 aa)) folds into the TRAM domain.

This sequence belongs to the methylthiotransferase family. RimO subfamily. It depends on [4Fe-4S] cluster as a cofactor.

The protein localises to the cytoplasm. It catalyses the reaction L-aspartate(89)-[ribosomal protein uS12]-hydrogen + (sulfur carrier)-SH + AH2 + 2 S-adenosyl-L-methionine = 3-methylsulfanyl-L-aspartate(89)-[ribosomal protein uS12]-hydrogen + (sulfur carrier)-H + 5'-deoxyadenosine + L-methionine + A + S-adenosyl-L-homocysteine + 2 H(+). Catalyzes the methylthiolation of an aspartic acid residue of ribosomal protein uS12. The protein is Ribosomal protein uS12 methylthiotransferase RimO of Shewanella oneidensis (strain ATCC 700550 / JCM 31522 / CIP 106686 / LMG 19005 / NCIMB 14063 / MR-1).